The primary structure comprises 155 residues: uncharacterized protein (155 aa).

The region spanning 37–140 is the SCP domain; that stretch reads IAELRKKLNL…GGYRLKTTDN (104 aa).

This is an uncharacterized protein from Borreliella burgdorferi (strain ATCC 35210 / DSM 4680 / CIP 102532 / B31) (Borrelia burgdorferi).